The following is a 292-amino-acid chain: Coatomer subunit epsilon (292 aa).

It belongs to the COPE family. As to quaternary structure, oligomeric complex that consists of at least the alpha, beta, beta', gamma, delta, epsilon and zeta subunits.

The protein localises to the cytoplasm. Its subcellular location is the golgi apparatus membrane. It is found in the cytoplasmic vesicle. It localises to the COPI-coated vesicle membrane. In terms of biological role, the coatomer is a cytosolic protein complex that binds to dilysine motifs and reversibly associates with Golgi non-clathrin-coated vesicles, which further mediate biosynthetic protein transport from the ER, via the Golgi up to the trans Golgi network. The coatomer complex is required for budding from Golgi membranes, and is essential for the retrograde Golgi-to-ER transport of dilysine-tagged proteins. The chain is Coatomer subunit epsilon (cope-1) from Caenorhabditis elegans.